The primary structure comprises 63 residues: Large ribosomal subunit protein bL28 (63 aa).

Belongs to the bacterial ribosomal protein bL28 family.

The chain is Large ribosomal subunit protein bL28 from Clostridium beijerinckii (strain ATCC 51743 / NCIMB 8052) (Clostridium acetobutylicum).